The sequence spans 488 residues: Proline--tRNA ligase (488 aa).

It belongs to the class-II aminoacyl-tRNA synthetase family. ProS type 3 subfamily. As to quaternary structure, homodimer.

The protein localises to the cytoplasm. It carries out the reaction tRNA(Pro) + L-proline + ATP = L-prolyl-tRNA(Pro) + AMP + diphosphate. Its function is as follows. Catalyzes the attachment of proline to tRNA(Pro) in a two-step reaction: proline is first activated by ATP to form Pro-AMP and then transferred to the acceptor end of tRNA(Pro). This is Proline--tRNA ligase from Borreliella afzelii (strain PKo) (Borrelia afzelii).